Here is a 112-residue protein sequence, read N- to C-terminus: MVKIRQFLLAILWLQLSCVSAAKNEVEQSPQNLTAQEGEFITINCSYSVGISALHWLQQHPGGGIVSLFMLSSGKKKHGRLIATINIQEKHSSLHITASHPRDSAVYICAVR.

An N-terminal signal peptide occupies residues 1 to 21 (MVKIRQFLLAILWLQLSCVSA). The Ig-like domain maps to 24–112 (NEVEQSPQNL…DSAVYICAVR (89 aa)). 2 N-linked (GlcNAc...) asparagine glycosylation sites follow: N32 and N44. C45 and C109 are disulfide-bonded.

Alpha-beta TR is a heterodimer composed of an alpha and beta chain; disulfide-linked. The alpha-beta TR is associated with the transmembrane signaling CD3 coreceptor proteins to form the TR-CD3 (TcR or TCR). The assembly of alpha-beta TR heterodimers with CD3 occurs in the endoplasmic reticulum where a single alpha-beta TR heterodimer associates with one CD3D-CD3E heterodimer, one CD3G-CD3E heterodimer and one CD247 homodimer forming a stable octameric structure. CD3D-CD3E and CD3G-CD3E heterodimers preferentially associate with TR alpha and TR beta chains, respectively. The association of the CD247 homodimer is the last step of TcR assembly in the endoplasmic reticulum and is required for transport to the cell surface.

The protein localises to the cell membrane. Its function is as follows. V region of the variable domain of T cell receptor (TR) alpha chain that participates in the antigen recognition. Alpha-beta T cell receptors are antigen specific receptors which are essential to the immune response and are present on the cell surface of T lymphocytes. Recognize peptide-major histocompatibility (MH) (pMH) complexes that are displayed by antigen presenting cells (APC), a prerequisite for efficient T cell adaptive immunity against pathogens. Binding of alpha-beta TR to pMH complex initiates TR-CD3 clustering on the cell surface and intracellular activation of LCK that phosphorylates the ITAM motifs of CD3G, CD3D, CD3E and CD247 enabling the recruitment of ZAP70. In turn ZAP70 phosphorylates LAT, which recruits numerous signaling molecules to form the LAT signalosome. The LAT signalosome propagates signal branching to three major signaling pathways, the calcium, the mitogen-activated protein kinase (MAPK) kinase and the nuclear factor NF-kappa-B (NF-kB) pathways, leading to the mobilization of transcription factors that are critical for gene expression and essential for T cell growth and differentiation. The T cell repertoire is generated in the thymus, by V-(D)-J rearrangement. This repertoire is then shaped by intrathymic selection events to generate a peripheral T cell pool of self-MH restricted, non-autoaggressive T cells. Post-thymic interaction of alpha-beta TR with the pMH complexes shapes TR structural and functional avidity. The protein is T cell receptor alpha variable 41 of Homo sapiens (Human).